Consider the following 276-residue polypeptide: NH(3)-dependent NAD(+) synthetase (276 aa).

An ATP-binding site is contributed by 43 to 50; it reads GISGGVDS. Residue Asp-49 coordinates Mg(2+). Arg-146 serves as a coordination point for deamido-NAD(+). Position 166 (Thr-166) interacts with ATP. Position 171 (Glu-171) interacts with Mg(2+). Residues Lys-179 and Asp-186 each contribute to the deamido-NAD(+) site. Positions 195 and 217 each coordinate ATP. Deamido-NAD(+) is bound at residue 266–267; it reads HK.

This sequence belongs to the NAD synthetase family. In terms of assembly, homodimer.

It catalyses the reaction deamido-NAD(+) + NH4(+) + ATP = AMP + diphosphate + NAD(+) + H(+). It participates in cofactor biosynthesis; NAD(+) biosynthesis; NAD(+) from deamido-NAD(+) (ammonia route): step 1/1. Its function is as follows. Catalyzes the ATP-dependent amidation of deamido-NAD to form NAD. Uses ammonia as a nitrogen source. This chain is NH(3)-dependent NAD(+) synthetase, found in Psychromonas ingrahamii (strain DSM 17664 / CCUG 51855 / 37).